We begin with the raw amino-acid sequence, 43 residues long: U5-hexatoxin-Mr1a (43 aa).

Disulfide bonds link Cys1–Cys16, Cys8–Cys21, Cys15–Cys36, and Cys17–Cys43.

Belongs to the neurotoxin 35 family. In terms of processing, contains 4 disulfide bonds. In terms of tissue distribution, expressed by the venom gland.

It is found in the secreted. Functionally, this toxin blocks the neuromuscular transmission, and also acts on muscle. It exerts an effect of first exciting and then inhibiting the contraction of muscle. This toxin is active only against mammals. The sequence is that of U5-hexatoxin-Mr1a from Macrothele raveni (Funnel-web spider).